The primary structure comprises 382 residues: Pyrimidine monooxygenase RutA (382 aa).

Residues 68–69 (IK), Asn134, Glu143, 159–160 (RY), and Ser209 each bind FMN.

Belongs to the NtaA/SnaA/DszA monooxygenase family. RutA subfamily.

The enzyme catalyses uracil + FMNH2 + NADH + O2 = (Z)-3-ureidoacrylate + FMN + NAD(+) + H2O + H(+). The catalysed reaction is thymine + FMNH2 + NADH + O2 = (Z)-2-methylureidoacrylate + FMN + NAD(+) + H2O + H(+). In terms of biological role, catalyzes the pyrimidine ring opening between N-3 and C-4 by an unusual flavin hydroperoxide-catalyzed mechanism, adding oxygen atoms in the process to yield ureidoacrylate peracid, that immediately reacts with FMN forming ureidoacrylate and FMN-N(5)-oxide. The FMN-N(5)-oxide reacts spontaneously with NADH to produce FMN. Requires the flavin reductase RutF to regenerate FMN in vivo. In Escherichia coli (strain B / BL21-DE3), this protein is Pyrimidine monooxygenase RutA.